The following is a 95-amino-acid chain: uncharacterized protein (95 aa).

This is an uncharacterized protein from Bacillus anthracis.